The primary structure comprises 274 residues: Penicillin-insensitive murein endopeptidase (274 aa).

A signal peptide spans 1-19 (MKKTAIALLAWFVSSASLA). Cystine bridges form between C44–C265, C187–C235, and C216–C223. Positions 110, 113, 120, 147, 150, and 211 each coordinate Zn(2+). The tract at residues 225 to 274 (DQPLPPPGDGCGAELQSWFEPPKPGTTKPEKKTPPPLPPSCQALLDEHVL) is disordered.

This sequence belongs to the peptidase M74 family. In terms of assembly, dimer. Zn(2+) is required as a cofactor.

Its subcellular location is the periplasm. Functionally, murein endopeptidase that cleaves the D-alanyl-meso-2,6-diamino-pimelyl amide bond that connects peptidoglycan strands. Likely plays a role in the removal of murein from the sacculus. This is Penicillin-insensitive murein endopeptidase from Salmonella heidelberg (strain SL476).